A 256-amino-acid chain; its full sequence is Thiazole synthase (256 aa).

The active-site Schiff-base intermediate with DXP is the Lys96. 1-deoxy-D-xylulose 5-phosphate-binding positions include Gly157, 183 to 184, and 205 to 206; these read AG and NT.

It belongs to the ThiG family. In terms of assembly, homotetramer. Forms heterodimers with either ThiH or ThiS.

Its subcellular location is the cytoplasm. The catalysed reaction is [ThiS sulfur-carrier protein]-C-terminal-Gly-aminoethanethioate + 2-iminoacetate + 1-deoxy-D-xylulose 5-phosphate = [ThiS sulfur-carrier protein]-C-terminal Gly-Gly + 2-[(2R,5Z)-2-carboxy-4-methylthiazol-5(2H)-ylidene]ethyl phosphate + 2 H2O + H(+). Its pathway is cofactor biosynthesis; thiamine diphosphate biosynthesis. In terms of biological role, catalyzes the rearrangement of 1-deoxy-D-xylulose 5-phosphate (DXP) to produce the thiazole phosphate moiety of thiamine. Sulfur is provided by the thiocarboxylate moiety of the carrier protein ThiS. In vitro, sulfur can be provided by H(2)S. This is Thiazole synthase from Clostridioides difficile (strain 630) (Peptoclostridium difficile).